The following is a 508-amino-acid chain: Bifunctional purine biosynthesis protein PurH (508 aa).

In terms of domain architecture, MGS-like spans 1–144 (MTRALLSVSD…KNFAGVLPIV (144 aa)).

It belongs to the PurH family.

The enzyme catalyses (6R)-10-formyltetrahydrofolate + 5-amino-1-(5-phospho-beta-D-ribosyl)imidazole-4-carboxamide = 5-formamido-1-(5-phospho-D-ribosyl)imidazole-4-carboxamide + (6S)-5,6,7,8-tetrahydrofolate. The catalysed reaction is IMP + H2O = 5-formamido-1-(5-phospho-D-ribosyl)imidazole-4-carboxamide. The protein operates within purine metabolism; IMP biosynthesis via de novo pathway; 5-formamido-1-(5-phospho-D-ribosyl)imidazole-4-carboxamide from 5-amino-1-(5-phospho-D-ribosyl)imidazole-4-carboxamide (10-formyl THF route): step 1/1. It functions in the pathway purine metabolism; IMP biosynthesis via de novo pathway; IMP from 5-formamido-1-(5-phospho-D-ribosyl)imidazole-4-carboxamide: step 1/1. This is Bifunctional purine biosynthesis protein PurH from Leuconostoc citreum (strain KM20).